Reading from the N-terminus, the 164-residue chain is ATP synthase subunit b (164 aa).

Residues 4 to 24 traverse the membrane as a helical segment; sequence LGINPTLFIAQLINFLLLIFI.

The protein belongs to the ATPase B chain family. F-type ATPases have 2 components, F(1) - the catalytic core - and F(0) - the membrane proton channel. F(1) has five subunits: alpha(3), beta(3), gamma(1), delta(1), epsilon(1). F(0) has four main subunits: a(1), b(2) and c(10-14). The alpha and beta chains form an alternating ring which encloses part of the gamma chain. F(1) is attached to F(0) by a central stalk formed by the gamma and epsilon chains, while a peripheral stalk is formed by the delta and b chains.

The protein localises to the cell membrane. Functionally, f(1)F(0) ATP synthase produces ATP from ADP in the presence of a proton or sodium gradient. F-type ATPases consist of two structural domains, F(1) containing the extramembraneous catalytic core and F(0) containing the membrane proton channel, linked together by a central stalk and a peripheral stalk. During catalysis, ATP synthesis in the catalytic domain of F(1) is coupled via a rotary mechanism of the central stalk subunits to proton translocation. In terms of biological role, component of the F(0) channel, it forms part of the peripheral stalk, linking F(1) to F(0). The chain is ATP synthase subunit b from Chloroflexus aurantiacus (strain ATCC 29366 / DSM 635 / J-10-fl).